Reading from the N-terminus, the 484-residue chain is Poly(A) RNA polymerase GLD2 (484 aa).

Phosphoserine is present on residues S62 and S69. Residues 76 to 92 (KRLSDEKNLPLDGKRQR) carry the Nuclear localization signal motif. S95 is subject to Phosphoserine. Residues D213 and D215 each coordinate Mg(2+). A PAP-associated domain is found at 386–440 (NLGDLLLGFLKYYATEFDWNSQMISVREAKAIPRPDGIEWRNKYICVEEPFDGTN).

This sequence belongs to the DNA polymerase type-B-like family. GLD2 subfamily. As to quaternary structure, interacts with CPEB1, CPEB2, CPSF1 and PABPC1. Interacts with QKI isoform QKI7; promoting recruitment to miRNA miR-122 and miR-122 stabilization. The cofactor is Mg(2+). Mn(2+) is required as a cofactor.

It is found in the cytoplasm. It localises to the nucleus. It catalyses the reaction RNA(n) + ATP = RNA(n)-3'-adenine ribonucleotide + diphosphate. Functionally, cytoplasmic poly(A) RNA polymerase that adds successive AMP monomers to the 3'-end of specific RNAs, forming a poly(A) tail. In contrast to the canonical nuclear poly(A) RNA polymerase, it only adds poly(A) to selected cytoplasmic mRNAs. Does not play a role in replication-dependent histone mRNA degradation. Adds a single nucleotide to the 3' end of specific miRNAs, monoadenylation stabilizes and prolongs the activity of some but not all miRNAs. This Bos taurus (Bovine) protein is Poly(A) RNA polymerase GLD2.